Here is a 358-residue protein sequence, read N- to C-terminus: 3-isopropylmalate dehydrogenase (358 aa).

Positions 92, 102, 130, and 224 each coordinate substrate. Residues Asp-224, Asp-248, and Asp-252 each contribute to the Mg(2+) site. 282–294 provides a ligand contact to NAD(+); the sequence is GSAPDIAGQGIAN.

This sequence belongs to the isocitrate and isopropylmalate dehydrogenases family. LeuB type 1 subfamily. In terms of assembly, homodimer. Requires Mg(2+) as cofactor. The cofactor is Mn(2+).

The protein localises to the cytoplasm. The catalysed reaction is (2R,3S)-3-isopropylmalate + NAD(+) = 4-methyl-2-oxopentanoate + CO2 + NADH. The protein operates within amino-acid biosynthesis; L-leucine biosynthesis; L-leucine from 3-methyl-2-oxobutanoate: step 3/4. Functionally, catalyzes the oxidation of 3-carboxy-2-hydroxy-4-methylpentanoate (3-isopropylmalate) to 3-carboxy-4-methyl-2-oxopentanoate. The product decarboxylates to 4-methyl-2 oxopentanoate. The protein is 3-isopropylmalate dehydrogenase of Bordetella avium (strain 197N).